Here is a 1350-residue protein sequence, read N- to C-terminus: Tectonin beta-propeller repeat-containing protein (1350 aa).

TECPR repeat units follow at residues 23–59 (GAWR…VHVH), 233–271 (LRWT…VRTG), 280–320 (DSWL…FRRG), and 336–371 (KGWV…HRSG). A compositionally biased stretch (low complexity) spans 396–415 (SSLSIVSRKSGGSSSTPGSK). Disordered stretches follow at residues 396–420 (SSLS…QSFS) and 671–691 (SGSG…SGTF). Residues 816–955 (YYNTLYNGMP…RIKLFNVLYR (140 aa)) form the Galectin domain. TECPR repeat units lie at residues 966 to 1000 (MHWR…VYNG), 1187 to 1223 (DAWE…FRYG), 1232 to 1269 (DAWQ…VRKE), and 1278 to 1322 (SHWQ…RRCG).

This sequence belongs to the TECPR1 family.

Its function is as follows. Involved in peroxisome biogenesis. This Drosophila melanogaster (Fruit fly) protein is Tectonin beta-propeller repeat-containing protein (Pex23).